The primary structure comprises 2946 residues: Neurobeachin (2946 aa).

The segment at 971–995 is disordered; the sequence is ENIKKGKKGNVSTISGLSSQTTGAK. Residues 980–993 show a composition bias toward polar residues; sequence NVSTISGLSSQTTG. Phosphoserine occurs at positions 1011 and 1014. A WD 1 repeat occupies 1326–1368; sequence TTMFRIPEFKWSPMHQRLLTDLLFALETDVHVWRSHSTKSVMD. Disordered regions lie at residues 1490 to 1531, 1651 to 1675, 1711 to 1731, and 1841 to 1860; these read QRDR…LSPI, TIKE…HTDS, VKKS…PATS, and GAVD…VNGA. Over residues 1497–1517 the composition is skewed to polar residues; the sequence is SSHGSSKPQEVPQSVTATAAS. Ser-1529 carries the post-translational modification Phosphoserine. Phosphoserine occurs at positions 1714 and 1717. Positions 1716–1731 are enriched in polar residues; it reads ESLTENPSETLKPATS. The segment covering 1845 to 1855 has biased composition (low complexity); it reads SGSSSSSSSSS. Ser-2138 is subject to Phosphoserine. The region spanning 2147-2255 is the BEACH-type PH domain; sequence NLAGPVVLST…TVKKVVYSLP (109 aa). The BEACH domain occupies 2274 to 2563; the sequence is ATPRQLYKSS…QLLIEPHPPR (290 aa). At Ser-2575 the chain carries Phosphoserine. 4 WD repeats span residues 2718–2761, 2778–2818, 2860–2899, and 2902–2941; these read GHWD…HIIG, GHDH…RALE, EIND…QLYI, and GCDA…WHYE.

The protein belongs to the WD repeat neurobeachin family. In terms of assembly, interacts with RII subunit of PKA. In terms of tissue distribution, predominant in many brain structures. Also expressed at medium levels in spleen, thymus, prostate, testis and ovary. Low level expression is seen in heart, kidney, pancreas, skeletal muscle and intestine.

It localises to the cytoplasm. The protein localises to the membrane. In terms of biological role, binds to type II regulatory subunits of protein kinase A and anchors/targets them to the membrane. May anchor the kinase to cytoskeletal and/or organelle-associated proteins. This Homo sapiens (Human) protein is Neurobeachin.